The primary structure comprises 455 residues: 12S seed storage protein CRB (455 aa).

The N-terminal stretch at M1–Q24 is a signal peptide. 2 disulfides stabilise this stretch: C30-C63 and C106-C276. 2 consecutive Cupin type-1 domains span residues L35–Q229 and E282–K431. T109 carries the post-translational modification Phosphothreonine. Phosphotyrosine is present on Y299. A phosphoserine mark is found at S301 and S367. Phosphothreonine is present on residues T395 and T420. A Phosphoserine modification is found at S436.

The protein belongs to the 11S seed storage protein (globulins) family. As to quaternary structure, hexamer; each subunit is composed of an acidic and a basic chain derived from a single precursor and linked by a disulfide bond. Ubiquitinated. In terms of processing, proteolytically processed during seed maturation at a conserved Asn-Gly peptide bond by an asparaginyl endopeptidase to produce two mature polypeptides referred to as alpha and beta subunits that are joined together by a disulfide bond. Post-translationally, phosphorylated in seeds on some Tyr residues in response to abscisic acid (ABA). Accumulates in seeds 8 days after anthesis.

The protein resides in the protein storage vacuole. Its function is as follows. Seed storage protein. The protein is 12S seed storage protein CRB (CRB) of Arabidopsis thaliana (Mouse-ear cress).